The sequence spans 310 residues: B3 domain-containing protein At4g02870 (310 aa).

The segment covering 1 to 21 has biased composition (polar residues); sequence MTLSDDPISPSTQESSNSSYV. The interval 1–39 is disordered; that stretch reads MTLSDDPISPSTQESSNSSYVRSKEAEKNSPSQETDEEV. Residues 205–300 constitute a DNA-binding region (TF-B3); sequence RCGRLILQSS…RLQFGVISRN (96 aa).

It is found in the nucleus. This Arabidopsis thaliana (Mouse-ear cress) protein is B3 domain-containing protein At4g02870 (ARF42).